A 374-amino-acid chain; its full sequence is Wnt inhibitory factor 1 (374 aa).

Residues 1 to 28 form the signal peptide; the sequence is MSLTGYFAAPLCSIFLFILAHADAGQQE. In terms of domain architecture, WIF spans 33–172; that stretch reads MWIDAHQARV…PQNAIFFKTC (140 aa). Asparagine 83 carries an N-linked (GlcNAc...) asparagine glycan. Disulfide bonds link cysteine 135-cysteine 172, cysteine 177-cysteine 187, cysteine 181-cysteine 193, cysteine 195-cysteine 204, cysteine 209-cysteine 219, cysteine 213-cysteine 225, and cysteine 227-cysteine 236. EGF-like domains lie at 173 to 205, 208 to 237, 237 to 269, 270 to 301, and 302 to 333; these read QQAK…PHCE, LCMP…INCD, DKVN…EQCE, TSKC…DLCS, and KPVC…RYCN. Asparagine 240 is a glycosylation site (N-linked (GlcNAc...) asparagine). 9 cysteine pairs are disulfide-bonded: cysteine 241–cysteine 251, cysteine 245–cysteine 257, cysteine 259–cysteine 268, cysteine 273–cysteine 283, cysteine 277–cysteine 289, cysteine 291–cysteine 300, cysteine 305–cysteine 315, cysteine 309–cysteine 321, and cysteine 323–cysteine 332. The tract at residues 343-374 is disordered; the sequence is ALRPTGSRNRQHTPSPKRTEDRQALPESNYIW. Polar residues predominate over residues 348–358; the sequence is GSRNRQHTPSP.

In terms of tissue distribution, during somatogenesis, expressed predominantly in unsegmented paraxial presomitic mesoderm and, to a much lesser extent, in newly segmented somites.

The protein resides in the secreted. Its function is as follows. Binds to WNT proteins and inhibits their activities. May be involved in mesoderm segmentation. The protein is Wnt inhibitory factor 1 (wif1) of Xenopus laevis (African clawed frog).